We begin with the raw amino-acid sequence, 294 residues long: Nucleotide-binding protein Maqu_2718 (294 aa).

8-15 (GRSGSGKS) contacts ATP. 61 to 64 (DARN) lines the GTP pocket.

The protein belongs to the RapZ-like family.

Its function is as follows. Displays ATPase and GTPase activities. The chain is Nucleotide-binding protein Maqu_2718 from Marinobacter nauticus (strain ATCC 700491 / DSM 11845 / VT8) (Marinobacter aquaeolei).